Here is a 492-residue protein sequence, read N- to C-terminus: Catalase isozyme 2 (492 aa).

Catalysis depends on residues H65 and N138. Residue Y348 coordinates heme.

Belongs to the catalase family. Homotetramer. It depends on heme as a cofactor.

Its subcellular location is the peroxisome. It carries out the reaction 2 H2O2 = O2 + 2 H2O. In terms of biological role, occurs in almost all aerobically respiring organisms and serves to protect cells from the toxic effects of hydrogen peroxide. The sequence is that of Catalase isozyme 2 (CAT2) from Gossypium hirsutum (Upland cotton).